The following is a 207-amino-acid chain: Homeobox protein BarH-like 1 (207 aa).

The segment at residues 95-154 (GRRSRTVFTELQLMGLEKRFEKQKYLSTPDRIDLAESLGLSQLQVKTWYQNRRMKWKKIV) is a DNA-binding region (homeobox). A disordered region spans residues 157-207 (GGGLESPTKPKGRPKKNSIPSSEQLSEQERAKETEKPPESPGEPSERQQEE). Positions 183–207 (EQERAKETEKPPESPGEPSERQQEE) are enriched in basic and acidic residues.

The protein belongs to the BAR homeobox family. In terms of tissue distribution, expressed predominantly in the facial primordia, developing stomach, and proximal limbs.

It is found in the nucleus. Functionally, transcription factor, which is involved in craniofacial development, in odontogenic region definition, and in stomach organogenesis. Binds to a regulatory module of the NCAM promoter. This chain is Homeobox protein BarH-like 1 (BARX1), found in Gallus gallus (Chicken).